The chain runs to 957 residues: Exoribonuclease II, mitochondrial (957 aa).

The N-terminal 54 residues, 1–54 (MNYRQLFLLQNVNLESNYLLKRVCLSLKLSPCKLTRKFHHACPSSSKVLKYFRI), are a transit peptide targeting the mitochondrion. Residues 503–843 (RVDLRHLKAF…FTHHQIQSVL (341 aa)) form the RNB domain.

Belongs to the RNR ribonuclease family.

It is found in the mitochondrion. It carries out the reaction Exonucleolytic cleavage in the 3'- to 5'-direction to yield nucleoside 5'-phosphates.. Its function is as follows. Required for intron-independent turnover and processing of mitochondrial RNA. Participates in 3'-mtRNA processing where it hydrolyzes single-stranded RNA or partially double-stranded RNA with 3'-single-stranded tails. The protein is Exoribonuclease II, mitochondrial (rpm1) of Schizosaccharomyces pombe (strain 972 / ATCC 24843) (Fission yeast).